Consider the following 998-residue polypeptide: MAMMTMIDVLERKDWENPVVSNWNRLPMHTPMDLLEKQSLNGLWNFDHFSRISDVPKNWLELTESKTEIIVPSNWQIEFKDKSDVPIYTNVTYPIPIQPPYVPEANPVGAYSRYFDITKEWLESGHVHLTFEGVGSAFHFWLNGEYGGYSEDSRLPAEFDISNLAKEGQNCLKVLVFRWSKVTYFEDQDMWRMSGIFRSVNLQWLPDNYLLDFSIKTDLDEDLDFANVKLQAYAKNIDDACLEFKLYDDEQLIGECHGFDAEIGVVNPKLWSDEIPYLYRLELTLMDRSGAVFHKETKKIGIRKIAIEKGQLKINGKALLVRGVNKHEFTPEHGYVVSEEVMIKDIKLMKEHNFNAVRCSHYPNDSRWYELCDEYGLYVMDEANIETHGMTPMNRLTNDPTYLPLMSERVTRMVMRDRNHPSIIIWSLGNESGYGSNHQALYDWCKSFDSSRPVHYEGGDDASRGATDATDIICPMYARVDSPSINAPYSLKTWMGVAGENRPLILCEYAHDMGNSLGGFGKYWQAFREIDRLQGGFIWDWVDQGLLKDGNYAYGGDFGDKPNDRQFSLNGLVFPNRQAKPALREAKYWQQYYQFELEKTPLGQVFAFTVTNEYLFRSTDNEKLCYQLINGLEVLWENELILNMPAGGSMRIDLSELPIDGTDNLFLNIQVKTIEKCNLLESDFEVAHQQFVLQEKINFTDRIDSNEEITLFEDEELLTVRSAKQKFIFNKSNGNLSRWLDEKGNEKLLHELSEQFTRAPLDNDIGVSEVEHIDPNAWLERWKGIGFYELKTLLKTMIIQATENEVIISVQTDYEAKGKIAFSTIREYHIFRNGELLLKVDFKRNIEFPEPARIGLSLQLAEKAENVTYFGLGPDENYPDRRGASLFGQWNLRITDMTTPYIFPSENGLRMETRELNYDRLKVRAMGQSFAFNLSPYSQNQLAKKGHWHLLEEEAGTWLNIDGFHMGVGGDDSWSPSVAQEYLLTKGNYHYEVSFKLT.

E431 acts as the Proton donor in catalysis. E508 functions as the Nucleophile in the catalytic mechanism.

Belongs to the glycosyl hydrolase 2 family.

The enzyme catalyses Hydrolysis of terminal non-reducing beta-D-galactose residues in beta-D-galactosides.. The sequence is that of Beta-galactosidase (lacZ) from Lactococcus lactis subsp. lactis (strain IL1403) (Streptococcus lactis).